The following is a 644-amino-acid chain: Chaperone protein DnaK (644 aa).

Thr199 bears the Phosphothreonine; by autocatalysis mark. The interval 605–644 (KKSSEGQAAQGQTQSQESTKPVEEGVVDAEFEEVKEEDKK) is disordered. Residues 609–623 (EGQAAQGQTQSQEST) are compositionally biased toward polar residues. The span at 629–644 (GVVDAEFEEVKEEDKK) shows a compositional bias: acidic residues.

This sequence belongs to the heat shock protein 70 family.

Its function is as follows. Acts as a chaperone. The sequence is that of Chaperone protein DnaK from Legionella pneumophila (strain Paris).